The primary structure comprises 137 residues: Venom allergen 4 (137 aa).

An N-terminal signal peptide occupies residues 1–19 (MKTFVLVSCLLVFTQIIYA).

Belongs to the ant venom allergen 2/4 family. As to quaternary structure, monomer. As to expression, expressed by the venom gland.

It localises to the secreted. The chain is Venom allergen 4 from Solenopsis geminata (Tropical fire ant).